A 98-amino-acid polypeptide reads, in one-letter code: Phosphoribosyl-ATP pyrophosphatase (98 aa).

It belongs to the PRA-PH family.

It localises to the cytoplasm. It carries out the reaction 1-(5-phospho-beta-D-ribosyl)-ATP + H2O = 1-(5-phospho-beta-D-ribosyl)-5'-AMP + diphosphate + H(+). It functions in the pathway amino-acid biosynthesis; L-histidine biosynthesis; L-histidine from 5-phospho-alpha-D-ribose 1-diphosphate: step 2/9. The polypeptide is Phosphoribosyl-ATP pyrophosphatase (Haloarcula marismortui (strain ATCC 43049 / DSM 3752 / JCM 8966 / VKM B-1809) (Halobacterium marismortui)).